Here is a 457-residue protein sequence, read N- to C-terminus: Siroheme synthase (457 aa).

The segment at 1–204 is precorrin-2 dehydrogenase /sirohydrochlorin ferrochelatase; the sequence is MDHLPIFCQL…NDQKAITETT (204 aa). Residues 22–23 and 43–44 each bind NAD(+); these read DV and LA. A Phosphoserine modification is found at Ser-128. Residues 216-457 form a uroporphyrinogen-III C-methyltransferase region; it reads GEVVLVGAGP…RDKLNWFSNH (242 aa). Pro-225 is a binding site for S-adenosyl-L-methionine. Asp-248 functions as the Proton acceptor in the catalytic mechanism. The active-site Proton donor is the Lys-270. S-adenosyl-L-methionine-binding positions include 301-303, Ile-306, 331-332, Met-382, and Gly-411; these read GGD and TA.

This sequence in the N-terminal section; belongs to the precorrin-2 dehydrogenase / sirohydrochlorin ferrochelatase family. In the C-terminal section; belongs to the precorrin methyltransferase family.

It carries out the reaction uroporphyrinogen III + 2 S-adenosyl-L-methionine = precorrin-2 + 2 S-adenosyl-L-homocysteine + H(+). The catalysed reaction is precorrin-2 + NAD(+) = sirohydrochlorin + NADH + 2 H(+). The enzyme catalyses siroheme + 2 H(+) = sirohydrochlorin + Fe(2+). It functions in the pathway cofactor biosynthesis; adenosylcobalamin biosynthesis; precorrin-2 from uroporphyrinogen III: step 1/1. Its pathway is cofactor biosynthesis; adenosylcobalamin biosynthesis; sirohydrochlorin from precorrin-2: step 1/1. The protein operates within porphyrin-containing compound metabolism; siroheme biosynthesis; precorrin-2 from uroporphyrinogen III: step 1/1. It participates in porphyrin-containing compound metabolism; siroheme biosynthesis; siroheme from sirohydrochlorin: step 1/1. It functions in the pathway porphyrin-containing compound metabolism; siroheme biosynthesis; sirohydrochlorin from precorrin-2: step 1/1. Multifunctional enzyme that catalyzes the SAM-dependent methylations of uroporphyrinogen III at position C-2 and C-7 to form precorrin-2 via precorrin-1. Then it catalyzes the NAD-dependent ring dehydrogenation of precorrin-2 to yield sirohydrochlorin. Finally, it catalyzes the ferrochelation of sirohydrochlorin to yield siroheme. This Escherichia coli O81 (strain ED1a) protein is Siroheme synthase.